Reading from the N-terminus, the 598-residue chain is Transcriptional repressor tup12 (598 aa).

Residues 118 to 177 (IASGVVPQSSKTKHGRNSVSFGKYGNAGPFNSDNSSKPLILNNGSSGGTPKNLRSPAIDS) form a disordered region. WD repeat units follow at residues 285-325 (EPPI…AMVF), 332-371 (LITL…QQIR), 374-413 (DIAQ…RTVC), 415-454 (WDVE…KVIR), 456-495 (WTSS…NTIK), 510-549 (YKEG…RTIQ), and 552-585 (SPDS…ATGS).

This sequence belongs to the WD repeat TUP1 family.

Functionally, transcriptional repressor. The protein is Transcriptional repressor tup12 (tup12) of Schizosaccharomyces pombe (strain 972 / ATCC 24843) (Fission yeast).